The sequence spans 176 residues: Inorganic pyrophosphatase (176 aa).

3 residues coordinate substrate: Lys-31, Arg-45, and Tyr-57. Mg(2+) is bound by residues Asp-67, Asp-72, and Asp-104. Tyr-142 provides a ligand contact to substrate.

This sequence belongs to the PPase family. As to quaternary structure, homohexamer. Requires Mg(2+) as cofactor.

It localises to the cytoplasm. It catalyses the reaction diphosphate + H2O = 2 phosphate + H(+). Functionally, catalyzes the hydrolysis of inorganic pyrophosphate (PPi) forming two phosphate ions. This chain is Inorganic pyrophosphatase, found in Haemophilus influenzae (strain ATCC 51907 / DSM 11121 / KW20 / Rd).